Consider the following 279-residue polypeptide: Putative pyruvate, phosphate dikinase regulatory protein (279 aa).

Position 156–163 (156–163 (GVSRTSKT)) interacts with ADP.

It belongs to the pyruvate, phosphate/water dikinase regulatory protein family. PDRP subfamily.

It carries out the reaction N(tele)-phospho-L-histidyl/L-threonyl-[pyruvate, phosphate dikinase] + ADP = N(tele)-phospho-L-histidyl/O-phospho-L-threonyl-[pyruvate, phosphate dikinase] + AMP + H(+). It catalyses the reaction N(tele)-phospho-L-histidyl/O-phospho-L-threonyl-[pyruvate, phosphate dikinase] + phosphate + H(+) = N(tele)-phospho-L-histidyl/L-threonyl-[pyruvate, phosphate dikinase] + diphosphate. Bifunctional serine/threonine kinase and phosphorylase involved in the regulation of the pyruvate, phosphate dikinase (PPDK) by catalyzing its phosphorylation/dephosphorylation. This Maricaulis maris (strain MCS10) (Caulobacter maris) protein is Putative pyruvate, phosphate dikinase regulatory protein.